The following is a 360-amino-acid chain: Decorin (360 aa).

An N-terminal signal peptide occupies residues 1-16; it reads MKATIIFLLVAQVSWA. A propeptide spanning residues 17–30 is cleaved from the precursor; sequence GPFQQKGLFDFMLE. Ser34 is a glycosylation site (O-linked (Xyl...) (glycosaminoglycan) serine). 2 cysteine pairs are disulfide-bonded: Cys55-Cys61 and Cys59-Cys68. LRR repeat units follow at residues 74-94, 95-118, 119-142, 143-163, 164-187, 188-213, 214-234, 235-258, 259-282, 283-305, 306-335, and 336-360; these read EKVPKDLPPDTALLDLQNNKI, TEIKDGDFKNLKNLHTLILINNKI, SKISPGAFAPLVKLERLYLSKNQL, KELPEKMPKTLQELRVHENEI, TKVRKSVFNGLNQMIVVELGTNPL, KSSGIENGAFQGMKKLSYIRIADTNI, TTIPQGLPPSLTELHLDGNKI, TKVDAASLKGLNNLAKLGLSFNSI, SAVDNGSLANTPHLRELHLNNNKL, VKVPGGLADHKYIQVVYLHNNNI, SAIGSNDFCPPGYNTKKASYSGVSLFSNPV, and QYWEIQPSTFRCVYVRAAVQLGNYK. A glycan (N-linked (GlcNAc...) asparagine) is linked at Asn212. Residues Asn263 and Asn304 are each glycosylated (N-linked (GlcNAc...) asparagine). The cysteines at positions 314 and 347 are disulfide-linked.

The protein belongs to the small leucine-rich proteoglycan (SLRP) family. SLRP class I subfamily. In terms of assembly, binds to type I and type II collagen, fibronectin and TGF-beta. Forms a ternary complex with MFAP2 and ELN. Interacts with DPT. The attached glycosaminoglycan chain can be either chondroitin 4-sulfate, chondroitin 6-sulfate or dermatan sulfate, depending upon the tissue of origin.

It localises to the secreted. The protein localises to the extracellular space. It is found in the extracellular matrix. Functionally, may affect the rate of fibrils formation. In Bos taurus (Bovine), this protein is Decorin (DCN).